A 143-amino-acid polypeptide reads, in one-letter code: Transcriptional regulator MraZ (143 aa).

SpoVT-AbrB domains follow at residues 5–47 (TYTP…PRAE) and 76–119 (TDEQ…DAQA).

It belongs to the MraZ family. As to quaternary structure, forms oligomers.

The protein localises to the cytoplasm. It is found in the nucleoid. The polypeptide is Transcriptional regulator MraZ (Mycobacterium avium (strain 104)).